The sequence spans 31 residues: Cyclotide cter-J (31 aa).

A cross-link (cyclopeptide (Gly-Asp)) is located at residues 1–31; that stretch reads GTVPCGESCVFIPCITGIAGCSCKNKVCYID. Cystine bridges form between cysteine 5–cysteine 21, cysteine 9–cysteine 23, and cysteine 14–cysteine 28.

Post-translationally, contains 3 disulfide bonds. This is a cyclic peptide.

In terms of biological role, probably participates in a plant defense mechanism. The chain is Cyclotide cter-J from Clitoria ternatea (Butterfly pea).